Reading from the N-terminus, the 388-residue chain is Succinate--CoA ligase [ADP-forming] subunit beta (388 aa).

The ATP-grasp domain maps to 9 to 244 (KEILRKYNVP…LDEEDPAEIE (236 aa)). Residues Lys46, 53–55 (GRG), Glu99, Ala102, and Glu107 each bind ATP. 2 residues coordinate Mg(2+): Asn199 and Asp213. Substrate-binding positions include Asn264 and 321–323 (GIM).

The protein belongs to the succinate/malate CoA ligase beta subunit family. In terms of assembly, heterotetramer of two alpha and two beta subunits. The cofactor is Mg(2+).

It carries out the reaction succinate + ATP + CoA = succinyl-CoA + ADP + phosphate. The enzyme catalyses GTP + succinate + CoA = succinyl-CoA + GDP + phosphate. It functions in the pathway carbohydrate metabolism; tricarboxylic acid cycle; succinate from succinyl-CoA (ligase route): step 1/1. Succinyl-CoA synthetase functions in the citric acid cycle (TCA), coupling the hydrolysis of succinyl-CoA to the synthesis of either ATP or GTP and thus represents the only step of substrate-level phosphorylation in the TCA. The beta subunit provides nucleotide specificity of the enzyme and binds the substrate succinate, while the binding sites for coenzyme A and phosphate are found in the alpha subunit. This is Succinate--CoA ligase [ADP-forming] subunit beta from Ralstonia pickettii (strain 12J).